The following is a 104-amino-acid chain: Large ribosomal subunit protein uL24 (104 aa).

The protein belongs to the universal ribosomal protein uL24 family. Part of the 50S ribosomal subunit.

One of two assembly initiator proteins, it binds directly to the 5'-end of the 23S rRNA, where it nucleates assembly of the 50S subunit. Its function is as follows. One of the proteins that surrounds the polypeptide exit tunnel on the outside of the subunit. The sequence is that of Large ribosomal subunit protein uL24 from Pseudoalteromonas translucida (strain TAC 125).